The chain runs to 214 residues: uncharacterized protein (214 aa).

Transmembrane regions (helical) follow at residues 23–43 (ILVGACAAVWLVFTGVSVAAA) and 65–85 (VLYAVIVVSALVIVGAIPVLL). The segment at 96-115 (ATRPTGASVRGGRSIGSGHP) is disordered. 2 consecutive transmembrane segments (helical) span residues 152 to 172 (VVLTSAIGIALIAVAAATYLM) and 181 to 201 (WISYGLAGVVTAGMPVIEWLY).

It localises to the cell membrane. This is an uncharacterized protein from Mycobacterium tuberculosis (strain CDC 1551 / Oshkosh).